Reading from the N-terminus, the 232-residue chain is Ribose-5-phosphate isomerase A (232 aa).

Substrate contacts are provided by residues 28-31 (TGST), 83-86 (DGAD), and 96-99 (KGGG). Glu105 serves as the catalytic Proton acceptor. Lys123 serves as a coordination point for substrate.

This sequence belongs to the ribose 5-phosphate isomerase family. As to quaternary structure, homodimer.

The enzyme catalyses aldehydo-D-ribose 5-phosphate = D-ribulose 5-phosphate. The protein operates within carbohydrate degradation; pentose phosphate pathway; D-ribose 5-phosphate from D-ribulose 5-phosphate (non-oxidative stage): step 1/1. Catalyzes the reversible conversion of ribose-5-phosphate to ribulose 5-phosphate. The chain is Ribose-5-phosphate isomerase A from Rhodopseudomonas palustris (strain BisB18).